The chain runs to 243 residues: Small ribosomal subunit protein uS2 (243 aa).

The protein belongs to the universal ribosomal protein uS2 family.

This is Small ribosomal subunit protein uS2 from Chromobacterium violaceum (strain ATCC 12472 / DSM 30191 / JCM 1249 / CCUG 213 / NBRC 12614 / NCIMB 9131 / NCTC 9757 / MK).